The primary structure comprises 823 residues: Valine--tRNA ligase (823 aa).

Lys547 serves as a coordination point for ATP.

The protein belongs to the class-I aminoacyl-tRNA synthetase family. ValS type 2 subfamily.

The protein resides in the cytoplasm. The catalysed reaction is tRNA(Val) + L-valine + ATP = L-valyl-tRNA(Val) + AMP + diphosphate. Its function is as follows. Catalyzes the attachment of valine to tRNA(Val). As ValRS can inadvertently accommodate and process structurally similar amino acids such as threonine, to avoid such errors, it has a 'posttransfer' editing activity that hydrolyzes mischarged Thr-tRNA(Val) in a tRNA-dependent manner. The chain is Valine--tRNA ligase (valS) from Aeropyrum pernix (strain ATCC 700893 / DSM 11879 / JCM 9820 / NBRC 100138 / K1).